The primary structure comprises 338 residues: Holliday junction branch migration complex subunit RuvB (338 aa).

Residues 1-181 (MERAITPEKR…FGVISRLEFY (181 aa)) are large ATPase domain (RuvB-L). ATP-binding positions include L20, R21, G62, K65, T66, T67, 128–130 (EDF), R171, Y181, and R218. A Mg(2+)-binding site is contributed by T66. The segment at 182–252 (THDELAFIVT…VVQETLRLLE (71 aa)) is small ATPAse domain (RuvB-S). Residues 255–338 (EMGFDQMDRM…TPERPQGSLF (84 aa)) form a head domain (RuvB-H) region. 2 residues coordinate DNA: R310 and R315.

It belongs to the RuvB family. As to quaternary structure, homohexamer. Forms an RuvA(8)-RuvB(12)-Holliday junction (HJ) complex. HJ DNA is sandwiched between 2 RuvA tetramers; dsDNA enters through RuvA and exits via RuvB. An RuvB hexamer assembles on each DNA strand where it exits the tetramer. Each RuvB hexamer is contacted by two RuvA subunits (via domain III) on 2 adjacent RuvB subunits; this complex drives branch migration. In the full resolvosome a probable DNA-RuvA(4)-RuvB(12)-RuvC(2) complex forms which resolves the HJ.

The protein resides in the cytoplasm. It catalyses the reaction ATP + H2O = ADP + phosphate + H(+). The RuvA-RuvB-RuvC complex processes Holliday junction (HJ) DNA during genetic recombination and DNA repair, while the RuvA-RuvB complex plays an important role in the rescue of blocked DNA replication forks via replication fork reversal (RFR). RuvA specifically binds to HJ cruciform DNA, conferring on it an open structure. The RuvB hexamer acts as an ATP-dependent pump, pulling dsDNA into and through the RuvAB complex. RuvB forms 2 homohexamers on either side of HJ DNA bound by 1 or 2 RuvA tetramers; 4 subunits per hexamer contact DNA at a time. Coordinated motions by a converter formed by DNA-disengaged RuvB subunits stimulates ATP hydrolysis and nucleotide exchange. Immobilization of the converter enables RuvB to convert the ATP-contained energy into a lever motion, pulling 2 nucleotides of DNA out of the RuvA tetramer per ATP hydrolyzed, thus driving DNA branch migration. The RuvB motors rotate together with the DNA substrate, which together with the progressing nucleotide cycle form the mechanistic basis for DNA recombination by continuous HJ branch migration. Branch migration allows RuvC to scan DNA until it finds its consensus sequence, where it cleaves and resolves cruciform DNA. The polypeptide is Holliday junction branch migration complex subunit RuvB (Trichlorobacter lovleyi (strain ATCC BAA-1151 / DSM 17278 / SZ) (Geobacter lovleyi)).